Reading from the N-terminus, the 274-residue chain is Thymidylate synthase (274 aa).

Arg21 contributes to the dUMP binding site. Residue His51 coordinates (6R)-5,10-methylene-5,6,7,8-tetrahydrofolate. Residue 123–124 (RR) participates in dUMP binding. Catalysis depends on Cys156, which acts as the Nucleophile. DUMP contacts are provided by residues 176–179 (RSAD), Asn187, and 217–219 (HIY). Asp179 serves as a coordination point for (6R)-5,10-methylene-5,6,7,8-tetrahydrofolate. Ser273 is a (6R)-5,10-methylene-5,6,7,8-tetrahydrofolate binding site.

Belongs to the thymidylate synthase family. Bacterial-type ThyA subfamily. In terms of assembly, homodimer.

Its subcellular location is the cytoplasm. It carries out the reaction dUMP + (6R)-5,10-methylene-5,6,7,8-tetrahydrofolate = 7,8-dihydrofolate + dTMP. The protein operates within pyrimidine metabolism; dTTP biosynthesis. Catalyzes the reductive methylation of 2'-deoxyuridine-5'-monophosphate (dUMP) to 2'-deoxythymidine-5'-monophosphate (dTMP) while utilizing 5,10-methylenetetrahydrofolate (mTHF) as the methyl donor and reductant in the reaction, yielding dihydrofolate (DHF) as a by-product. This enzymatic reaction provides an intracellular de novo source of dTMP, an essential precursor for DNA biosynthesis. The protein is Thymidylate synthase of Francisella tularensis subsp. novicida (strain U112).